We begin with the raw amino-acid sequence, 490 residues long: Betaine aldehyde dehydrogenase (490 aa).

N93 is a binding site for K(+). Residue 150-152 (GAW) coordinates NAD(+). The active-site Charge relay system is the K162. Residue 176–179 (KPSE) participates in NAD(+) binding. V180 is a binding site for K(+). 230 to 233 (GTAT) provides a ligand contact to NAD(+). L246 contributes to the K(+) binding site. E252 functions as the Proton acceptor in the catalytic mechanism. 3 residues coordinate NAD(+): G254, C286, and E387. C286 serves as the catalytic Nucleophile. Position 286 is a cysteine sulfenic acid (-SOH) (C286). K457 and G460 together coordinate K(+). The active-site Charge relay system is E464.

It belongs to the aldehyde dehydrogenase family. In terms of assembly, dimer of dimers. Requires K(+) as cofactor.

It carries out the reaction betaine aldehyde + NAD(+) + H2O = glycine betaine + NADH + 2 H(+). The protein operates within amine and polyamine biosynthesis; betaine biosynthesis via choline pathway; betaine from betaine aldehyde: step 1/1. In terms of biological role, involved in the biosynthesis of the osmoprotectant glycine betaine. Catalyzes the irreversible oxidation of betaine aldehyde to the corresponding acid. The sequence is that of Betaine aldehyde dehydrogenase from Xanthomonas campestris pv. campestris (strain ATCC 33913 / DSM 3586 / NCPPB 528 / LMG 568 / P 25).